Consider the following 161-residue polypeptide: Cytochrome c-type biogenesis protein CcmE (161 aa).

The Cytoplasmic portion of the chain corresponds to 1–8 (MNPRRKKR). The chain crosses the membrane as a helical; Signal-anchor for type II membrane protein span at residues 9–29 (LTLAVALIAGVAAVASLLLYA). Over 30-161 (LNSNLNLFYT…TYNQKALEDK (132 aa)) the chain is Periplasmic. Heme-binding residues include H131 and Y135. Positions 142–161 (EAMGQTHEKPTYNQKALEDK) are disordered. Over residues 147–161 (THEKPTYNQKALEDK) the composition is skewed to basic and acidic residues.

This sequence belongs to the CcmE/CycJ family.

The protein resides in the cell inner membrane. Heme chaperone required for the biogenesis of c-type cytochromes. Transiently binds heme delivered by CcmC and transfers the heme to apo-cytochromes in a process facilitated by CcmF and CcmH. In Shewanella frigidimarina (strain NCIMB 400), this protein is Cytochrome c-type biogenesis protein CcmE.